Here is a 320-residue protein sequence, read N- to C-terminus: Olfactory receptor 51E2 (320 aa).

Residues 1-27 lie on the Extracellular side of the membrane; it reads MSSCNFTHATFLLIGIPGLEEAHFWFG. Residue N5 is glycosylated (N-linked (GlcNAc...) asparagine). The helical transmembrane segment at 28–48 threads the bilayer; that stretch reads FPLLSMYAVALFGNCIVVFIV. Residues 49–53 are Cytoplasmic-facing; that stretch reads RTERS. A helical membrane pass occupies residues 54-74; sequence LHAPMYLFLCMLAAIDLALST. Residues 75–98 are Extracellular-facing; that stretch reads STMPKILALFWFDSREITFDACLA. C96 and C178 are disulfide-bonded. A helical transmembrane segment spans residues 99 to 119; the sequence is QMFFIHTLSAIESTILLAMAF. The Cytoplasmic portion of the chain corresponds to 120–141; the sequence is DRYVAICHPLRHAAVLNNTVTV. A helical membrane pass occupies residues 142–162; that stretch reads QIGMVALVRGSLFFFPLPLLI. Residues 163 to 200 are Extracellular-facing; sequence KRLAFCHSNVLSHSYCVHQDVMKLAYTDTLPNVVYGLT. The chain crosses the membrane as a helical span at residues 201–221; the sequence is AILLVMGVDVMFISLSYFLII. Over 222-239 the chain is Cytoplasmic; the sequence is RTVLQLPSKSERAKAFGT. A helical transmembrane segment spans residues 240-260; it reads CVSHISVVLAFYVPLIGLSVV. Residues 261 to 269 lie on the Extracellular side of the membrane; that stretch reads HRFGNSLDP. The helical transmembrane segment at 270–290 threads the bilayer; sequence IVHVLMGDVYLLLPPVINPII. Over 291 to 320 the chain is Cytoplasmic; sequence YGAKTKQIRTRVLAMFKISCDKDIEAGGNT.

Belongs to the G-protein coupled receptor 1 family. In terms of tissue distribution, in brain, expressed in medulla oblongata by cells close to the fourth ventricle, in the area postrema, the nucleus tractus solitarius. Expressed in olfactory epithelium and vomeronasal organ. Expressed in kidney by large renal vessels, renal afferent arterioles, and extrarenal vascular beds. In small resistance vessels the expression is restricted to cells of the juxtaglomerular afferent arteriole, which mediate renin secretion. Also detected in small blood vessels in a variety of tissues including heart, diaphragm, skeletal muscle, and skin. In the heart, esophagus, and stomach it is detected in axons of autonomic neurons and neurons of the enteric plexus. Also detected in colon and liver. Expressed in the glomus cells of the carotid body.

It is found in the cell membrane. The protein resides in the early endosome membrane. Its function is as follows. Olfactory receptor. The activity of this receptor is probably mediated by G-proteins which induce elevation of intracellular Ca(2+), cAMP and activation of phosphorylation of the protein kinases PKA and MAPK3/MAPK1. Activation of OR51E2 may affect melanocyte proliferation, differentiation, and melanogenesis and may increase proliferation and migration of primary retinal pigment epithelial (RPE) cells. Activated by the short chain fatty acids (SCFA), acetate and propionate. In response to SCFA, may positively regulate renin secretion and increase blood pressure. May also be activated by steroid hormones and regulate cell proliferation. Activated by L-lactate in glomus cells. The chain is Olfactory receptor 51E2 (Or51e2) from Mus musculus (Mouse).